The sequence spans 174 residues: Peptide deformylase (174 aa).

Fe cation-binding residues include C98 and H140. The active site involves E141. Fe cation is bound at residue H144.

Belongs to the polypeptide deformylase family. It depends on Fe(2+) as a cofactor.

The enzyme catalyses N-terminal N-formyl-L-methionyl-[peptide] + H2O = N-terminal L-methionyl-[peptide] + formate. Functionally, removes the formyl group from the N-terminal Met of newly synthesized proteins. Requires at least a dipeptide for an efficient rate of reaction. N-terminal L-methionine is a prerequisite for activity but the enzyme has broad specificity at other positions. The polypeptide is Peptide deformylase (Bradyrhizobium diazoefficiens (strain JCM 10833 / BCRC 13528 / IAM 13628 / NBRC 14792 / USDA 110)).